Consider the following 800-residue polypeptide: Endoglucanase (800 aa).

Residues 1 to 30 (MMLRKKTKQLISSILILVLLLSLFPTALAA) form the signal peptide. The active-site Proton donor is the E190. The Nucleophile role is filled by E305. Residues 761–800 (AATTEPVEPEPVDPGEETPPVDEKEAKTEQKEAEKEEKEE) form a disordered region. Acidic residues predominate over residues 767–780 (VEPEPVDPGEETPP). Residues 781–800 (VDEKEAKTEQKEAEKEEKEE) show a composition bias toward basic and acidic residues.

Belongs to the glycosyl hydrolase 5 (cellulase A) family.

The catalysed reaction is Endohydrolysis of (1-&gt;4)-beta-D-glucosidic linkages in cellulose, lichenin and cereal beta-D-glucans.. This chain is Endoglucanase, found in Halalkalibacter akibai (strain ATCC 43226 / DSM 21942 / CIP 109018 / JCM 9157 / 1139) (Bacillus akibai).